Consider the following 77-residue polypeptide: UPF0349 protein lin2491 (77 aa).

This sequence belongs to the UPF0349 family.

The chain is UPF0349 protein lin2491 from Listeria innocua serovar 6a (strain ATCC BAA-680 / CLIP 11262).